We begin with the raw amino-acid sequence, 163 residues long: Phosphopantetheine adenylyltransferase (163 aa).

Ser8 serves as a coordination point for substrate. Residues 8–9 (SF) and His16 each bind ATP. Substrate contacts are provided by Lys40, Thr72, and Arg86. ATP is bound by residues 87 to 89 (GLR), Glu97, and 122 to 128 (HSFLSSS).

It belongs to the bacterial CoaD family. As to quaternary structure, homohexamer. The cofactor is Mg(2+).

It localises to the cytoplasm. It catalyses the reaction (R)-4'-phosphopantetheine + ATP + H(+) = 3'-dephospho-CoA + diphosphate. The protein operates within cofactor biosynthesis; coenzyme A biosynthesis; CoA from (R)-pantothenate: step 4/5. Reversibly transfers an adenylyl group from ATP to 4'-phosphopantetheine, yielding dephospho-CoA (dPCoA) and pyrophosphate. The polypeptide is Phosphopantetheine adenylyltransferase (Synechococcus sp. (strain CC9902)).